A 354-amino-acid chain; its full sequence is D-alanine--D-alanine ligase (354 aa).

One can recognise an ATP-grasp domain in the interval 154 to 348 (RSWFLTNNIN…FTNLIEEIIK (195 aa)). Position 181 to 232 (181 to 232 (MKRPYVIKPITQGSSIGIEVIFEEDDFNFANYDFPYGDQVIIEKYIKGRELQ)) interacts with ATP. Residues Glu-301, Glu-315, and Asn-317 each contribute to the Mg(2+) site.

This sequence belongs to the D-alanine--D-alanine ligase family. The cofactor is Mg(2+). Mn(2+) serves as cofactor.

The protein resides in the cytoplasm. It carries out the reaction 2 D-alanine + ATP = D-alanyl-D-alanine + ADP + phosphate + H(+). Its pathway is cell wall biogenesis; peptidoglycan biosynthesis. Its function is as follows. Cell wall formation. This chain is D-alanine--D-alanine ligase, found in Rickettsia canadensis (strain McKiel).